A 245-amino-acid polypeptide reads, in one-letter code: Chymotrypsinogen A (245 aa).

5 disulfides stabilise this stretch: cysteine 1–cysteine 122, cysteine 42–cysteine 58, cysteine 136–cysteine 201, cysteine 168–cysteine 182, and cysteine 191–cysteine 220. A propeptide spanning residues 14-15 (SR) is cleaved from the precursor. Residues 16–243 (IVNGEEAVPG…LVNWVQQTLA (228 aa)) enclose the Peptidase S1 domain. Residues histidine 57 and aspartate 102 each act as charge relay system in the active site. Residues 147–148 (TN) constitute a propeptide that is removed on maturation. Serine 195 functions as the Charge relay system in the catalytic mechanism.

It belongs to the peptidase S1 family.

It localises to the secreted. It is found in the extracellular space. The enzyme catalyses Preferential cleavage: Tyr-|-Xaa, Trp-|-Xaa, Phe-|-Xaa, Leu-|-Xaa.. The sequence is that of Chymotrypsinogen A from Bos taurus (Bovine).